The primary structure comprises 317 residues: Biotin synthase (317 aa).

The Radical SAM core domain maps to N42–K260. Residues C57, C61, and C64 each contribute to the [4Fe-4S] cluster site. 4 residues coordinate [2Fe-2S] cluster: C101, C132, C192, and R264.

The protein belongs to the radical SAM superfamily. Biotin synthase family. In terms of assembly, homodimer. The cofactor is [4Fe-4S] cluster. It depends on [2Fe-2S] cluster as a cofactor.

The enzyme catalyses (4R,5S)-dethiobiotin + (sulfur carrier)-SH + 2 reduced [2Fe-2S]-[ferredoxin] + 2 S-adenosyl-L-methionine = (sulfur carrier)-H + biotin + 2 5'-deoxyadenosine + 2 L-methionine + 2 oxidized [2Fe-2S]-[ferredoxin]. Its pathway is cofactor biosynthesis; biotin biosynthesis; biotin from 7,8-diaminononanoate: step 2/2. In terms of biological role, catalyzes the conversion of dethiobiotin (DTB) to biotin by the insertion of a sulfur atom into dethiobiotin via a radical-based mechanism. This chain is Biotin synthase, found in Thiobacillus denitrificans (strain ATCC 25259 / T1).